The chain runs to 230 residues: CRP-like protein Clp (230 aa).

18–139 (PSLALDAGTI…APKILYAIGV (122 aa)) is a binding site for a nucleoside 3',5'-cyclic phosphate. The 73-residue stretch at 158–230 (LDVTDRIVRT…GKTVVLYGTR (73 aa)) folds into the HTH crp-type domain. Positions 190 to 209 (RQELARLVGCSREMAGRVLK) form a DNA-binding region, H-T-H motif.

In terms of assembly, homodimer.

It is found in the cytoplasm. Allosterically inhibited by cyclic di-GMP (c-di-GMP), which binds to Clp and abolishes its ability to bind its target gene promoter. Its function is as follows. Global transcriptional regulator that regulates virulence factors production by activating or repressing the expression of a large set of genes in diffusible signal factor (DSF) pathway. In Xanthomonas axonopodis pv. citri (strain 306), this protein is CRP-like protein Clp (clp).